The chain runs to 61 residues: Small ribosomal subunit protein uS14 (61 aa).

The Zn(2+) site is built by C24, C27, C40, and C43.

Belongs to the universal ribosomal protein uS14 family. Zinc-binding uS14 subfamily. As to quaternary structure, part of the 30S ribosomal subunit. Contacts proteins S3 and S10. Requires Zn(2+) as cofactor.

Functionally, binds 16S rRNA, required for the assembly of 30S particles and may also be responsible for determining the conformation of the 16S rRNA at the A site. The sequence is that of Small ribosomal subunit protein uS14 from Mycobacterium avium (strain 104).